The chain runs to 130 residues: Small ribosomal subunit protein uS9 (130 aa).

It belongs to the universal ribosomal protein uS9 family.

This is Small ribosomal subunit protein uS9 from Aliivibrio salmonicida (strain LFI1238) (Vibrio salmonicida (strain LFI1238)).